The following is a 445-amino-acid chain: Ribosomal protein uS12 methylthiotransferase RimO (445 aa).

An MTTase N-terminal domain is found at 4–119 (YKVGMVSLGC…INEAIMNFIN (116 aa)). [4Fe-4S] cluster-binding residues include C13, C48, C82, C157, C161, and C164. Positions 143–373 (TTDKATAYLR…MLLQKEVSEE (231 aa)) constitute a Radical SAM core domain. The 66-residue stretch at 376-441 (KNKVGREYDV…EYDLVGVVCN (66 aa)) folds into the TRAM domain.

It belongs to the methylthiotransferase family. RimO subfamily. The cofactor is [4Fe-4S] cluster.

The protein localises to the cytoplasm. The enzyme catalyses L-aspartate(89)-[ribosomal protein uS12]-hydrogen + (sulfur carrier)-SH + AH2 + 2 S-adenosyl-L-methionine = 3-methylsulfanyl-L-aspartate(89)-[ribosomal protein uS12]-hydrogen + (sulfur carrier)-H + 5'-deoxyadenosine + L-methionine + A + S-adenosyl-L-homocysteine + 2 H(+). Its function is as follows. Catalyzes the methylthiolation of an aspartic acid residue of ribosomal protein uS12. The chain is Ribosomal protein uS12 methylthiotransferase RimO from Clostridium perfringens (strain 13 / Type A).